A 567-amino-acid polypeptide reads, in one-letter code: Glutamine-dependent NAD(+) synthetase (567 aa).

The region spanning Leu2–Leu242 is the CN hydrolase domain. The Proton acceptor; for glutaminase activity role is filled by Glu41. The active-site For glutaminase activity is the Lys109. Tyr115 contributes to the L-glutamine binding site. The Nucleophile; for glutaminase activity role is filled by Cys145. Positions 172 and 178 each coordinate L-glutamine. The ligase stretch occupies residues Pro287–Lys567. Gly316–Ser323 is an ATP binding site. Asn399 serves as a coordination point for deamido-NAD(+). Residue Thr423 participates in ATP binding. Residues Glu428 and Lys538 each coordinate deamido-NAD(+).

It in the C-terminal section; belongs to the NAD synthetase family.

It catalyses the reaction deamido-NAD(+) + L-glutamine + ATP + H2O = L-glutamate + AMP + diphosphate + NAD(+) + H(+). The protein operates within cofactor biosynthesis; NAD(+) biosynthesis; NAD(+) from deamido-NAD(+) (L-Gln route): step 1/1. Functionally, catalyzes the ATP-dependent amidation of deamido-NAD to form NAD. Uses L-glutamine as a nitrogen source. The protein is Glutamine-dependent NAD(+) synthetase of Aquifex aeolicus (strain VF5).